Reading from the N-terminus, the 200-residue chain is LHFPL tetraspan subfamily member 6 protein (200 aa).

The first 23 residues, 1 to 23, serve as a signal peptide directing secretion; the sequence is MASSLTCTGVIWALLSFLSAATS. 3 helical membrane-spanning segments follow: residues 84–104, 123–143, and 166–186; these read ICTIVTGLGCGLLLLVALTAL, GIQFLGGLLIGAGCALYPLGW, and IGWAYYCTGAGAAAAMLLCTW.

This sequence belongs to the LHFP family.

Its subcellular location is the membrane. The chain is LHFPL tetraspan subfamily member 6 protein from Mus musculus (Mouse).